The chain runs to 59 residues: Small integral membrane protein 30 (59 aa).

Residues 1 to 24 form the signal peptide; that stretch reads MNSVSTQLILVLASLLLILPVVEA. At 25 to 29 the chain is on the extracellular side; the sequence is VEAGD. Residues 30–50 form a helical membrane-spanning segment; that stretch reads AIALLLGVVLSITGICACLGI. The Cytoplasmic portion of the chain corresponds to 51-59; that stretch reads YARKRNGQM.

As to quaternary structure, interacts (via transmembrane domain) with antiviral protein MAVS (via transmembrane domain); the interaction disrupts MAVS interaction with RIGI and inhibits MAVS aggregation, resulting in the repression of type I interferon signaling and innate immune responses.

It localises to the endoplasmic reticulum membrane. It is found in the mitochondrion membrane. Negatively regulates antiviral innate immune responses. Disrupts the interaction of antiviral protein MAVS with innate immune receptor RIGI and inhibits MAVS aggregation, resulting in the repression of type I interferon signaling and innate immune responses. This is Small integral membrane protein 30 from Mus musculus (Mouse).